We begin with the raw amino-acid sequence, 99 residues long: Putative transmembrane protein ORF13 (99 aa).

3 helical membrane-spanning segments follow: residues 8–28 (IATF…MAGI), 42–62 (LGLF…YIIV), and 73–93 (GPIT…AIIA).

It localises to the host membrane. This is Putative transmembrane protein ORF13 from His1 virus (isolate Australia/Victoria) (His1V).